Reading from the N-terminus, the 93-residue chain is Muconolactone Delta-isomerase (93 aa).

The protein belongs to the muconolactone Delta-isomerase family. Homodecamer.

It catalyses the reaction (S)-muconolactone = (4,5-dihydro-5-oxofuran-2-yl)-acetate. It functions in the pathway aromatic compound metabolism; beta-ketoadipate pathway; 5-oxo-4,5-dihydro-2-furylacetate from catechol: step 3/3. The protein is Muconolactone Delta-isomerase (catC) of Rhodococcus opacus (Nocardia opaca).